Reading from the N-terminus, the 489-residue chain is Glycogen synthase (489 aa).

R20 is an ADP-alpha-D-glucose binding site.

The protein belongs to the glycosyltransferase 1 family. Bacterial/plant glycogen synthase subfamily.

It carries out the reaction [(1-&gt;4)-alpha-D-glucosyl](n) + ADP-alpha-D-glucose = [(1-&gt;4)-alpha-D-glucosyl](n+1) + ADP + H(+). It functions in the pathway glycan biosynthesis; glycogen biosynthesis. Synthesizes alpha-1,4-glucan chains using ADP-glucose. In Chlorobium phaeovibrioides (strain DSM 265 / 1930) (Prosthecochloris vibrioformis (strain DSM 265)), this protein is Glycogen synthase.